The chain runs to 315 residues: Methionyl-tRNA formyltransferase (315 aa).

113–116 (SLLP) contributes to the (6S)-5,6,7,8-tetrahydrofolate binding site.

Belongs to the Fmt family.

The enzyme catalyses L-methionyl-tRNA(fMet) + (6R)-10-formyltetrahydrofolate = N-formyl-L-methionyl-tRNA(fMet) + (6S)-5,6,7,8-tetrahydrofolate + H(+). Its function is as follows. Attaches a formyl group to the free amino group of methionyl-tRNA(fMet). The formyl group appears to play a dual role in the initiator identity of N-formylmethionyl-tRNA by promoting its recognition by IF2 and preventing the misappropriation of this tRNA by the elongation apparatus. The protein is Methionyl-tRNA formyltransferase of Klebsiella pneumoniae (strain 342).